The primary structure comprises 344 residues: Fructose-1,6-bisphosphatase class 1 (344 aa).

Residues Glu-90, Asp-109, Leu-111, and Asp-112 each coordinate Mg(2+). Residues 112–115 (DGSS) and Asn-200 contribute to the substrate site. A Mg(2+)-binding site is contributed by Glu-271.

This sequence belongs to the FBPase class 1 family. In terms of assembly, homotetramer. It depends on Mg(2+) as a cofactor.

Its subcellular location is the cytoplasm. The catalysed reaction is beta-D-fructose 1,6-bisphosphate + H2O = beta-D-fructose 6-phosphate + phosphate. It participates in carbohydrate biosynthesis; gluconeogenesis. This Nitrobacter vulgaris protein is Fructose-1,6-bisphosphatase class 1.